A 206-amino-acid chain; its full sequence is Small ribosomal subunit protein uS4 (206 aa).

Positions 96–156 constitute an S4 RNA-binding domain; it reads GRLDNVVYRM…EKAKKQARIK (61 aa).

Belongs to the universal ribosomal protein uS4 family. In terms of assembly, part of the 30S ribosomal subunit. Contacts protein S5. The interaction surface between S4 and S5 is involved in control of translational fidelity.

In terms of biological role, one of the primary rRNA binding proteins, it binds directly to 16S rRNA where it nucleates assembly of the body of the 30S subunit. Functionally, with S5 and S12 plays an important role in translational accuracy. In Tolumonas auensis (strain DSM 9187 / NBRC 110442 / TA 4), this protein is Small ribosomal subunit protein uS4.